The primary structure comprises 492 residues: Protein nucleotidyltransferase YdiU (492 aa).

Residues Gly-90, Gly-92, Arg-93, Lys-113, Asp-125, Gly-126, Arg-176, and Arg-183 each contribute to the ATP site. The active-site Proton acceptor is the Asp-252. 2 residues coordinate Mg(2+): Asn-253 and Asp-262. Position 262 (Asp-262) interacts with ATP.

It belongs to the SELO family. It depends on Mg(2+) as a cofactor. Requires Mn(2+) as cofactor.

The catalysed reaction is L-seryl-[protein] + ATP = 3-O-(5'-adenylyl)-L-seryl-[protein] + diphosphate. It catalyses the reaction L-threonyl-[protein] + ATP = 3-O-(5'-adenylyl)-L-threonyl-[protein] + diphosphate. It carries out the reaction L-tyrosyl-[protein] + ATP = O-(5'-adenylyl)-L-tyrosyl-[protein] + diphosphate. The enzyme catalyses L-histidyl-[protein] + UTP = N(tele)-(5'-uridylyl)-L-histidyl-[protein] + diphosphate. The catalysed reaction is L-seryl-[protein] + UTP = O-(5'-uridylyl)-L-seryl-[protein] + diphosphate. It catalyses the reaction L-tyrosyl-[protein] + UTP = O-(5'-uridylyl)-L-tyrosyl-[protein] + diphosphate. Its function is as follows. Nucleotidyltransferase involved in the post-translational modification of proteins. It can catalyze the addition of adenosine monophosphate (AMP) or uridine monophosphate (UMP) to a protein, resulting in modifications known as AMPylation and UMPylation. The sequence is that of Protein nucleotidyltransferase YdiU from Thioalkalivibrio sulfidiphilus (strain HL-EbGR7).